A 225-amino-acid polypeptide reads, in one-letter code: Thymidylate kinase (225 aa).

An ATP-binding site is contributed by 12–19; it reads GGEGAGKS.

It belongs to the thymidylate kinase family.

It catalyses the reaction dTMP + ATP = dTDP + ADP. Functionally, phosphorylation of dTMP to form dTDP in both de novo and salvage pathways of dTTP synthesis. This is Thymidylate kinase from Chelativorans sp. (strain BNC1).